The sequence spans 720 residues: Biotin biosynthesis bifunctional protein BioWF (720 aa).

The interval 1-39 (MRFSIKMRASARVSSSPSTSDGSSGDHTESRDRADRHIS) is disordered. Residues 8–23 (RASARVSSSPSTSDGS) are compositionally biased toward low complexity. The segment covering 24–39 (SGDHTESRDRADRHIS) has biased composition (basic and acidic residues). A substrate-binding site is contributed by arginine 314. 401–402 (GY) serves as a coordination point for pyridoxal 5'-phosphate. Residue histidine 439 participates in substrate binding. Pyridoxal 5'-phosphate contacts are provided by residues serine 488, 513-516 (DDAH), and 564-567 (TASK). Lysine 567 bears the N6-(pyridoxal phosphate)lysine mark. Threonine 684 is a binding site for substrate.

In the N-terminal section; belongs to the BioW family. It in the C-terminal section; belongs to the class-II pyridoxal-phosphate-dependent aminotransferase family. BioF subfamily. Homodimer. The cofactor is Mg(2+). Pyridoxal 5'-phosphate serves as cofactor.

It carries out the reaction heptanedioate + ATP + CoA = 6-carboxyhexanoyl-CoA + AMP + diphosphate. The enzyme catalyses 6-carboxyhexanoyl-[ACP] + L-alanine + H(+) = (8S)-8-amino-7-oxononanoate + holo-[ACP] + CO2. Its pathway is metabolic intermediate metabolism; pimeloyl-CoA biosynthesis; pimeloyl-CoA from pimelate: step 1/1. The protein operates within cofactor biosynthesis; biotin biosynthesis. In terms of biological role, catalyzes both the decarboxylative condensation of pimeloyl-[acyl-carrier protein] and L-alanine to produce 8-amino-7-oxononanoate (AON), [acyl-carrier protein], and carbon dioxide, and the transformation of pimelate into pimeloyl-CoA with concomitant hydrolysis of ATP to AMP. This is Biotin biosynthesis bifunctional protein BioWF (bioWF) from Corynebacterium kroppenstedtii (strain DSM 44385 / JCM 11950 / CIP 105744 / CCUG 35717).